Consider the following 269-residue polypeptide: tRNA pseudouridine synthase A (269 aa).

Residue aspartate 55 is the Nucleophile of the active site. Tyrosine 111 is a substrate binding site.

It belongs to the tRNA pseudouridine synthase TruA family.

It carries out the reaction uridine(38/39/40) in tRNA = pseudouridine(38/39/40) in tRNA. Formation of pseudouridine at positions 38, 39 and 40 in the anticodon stem and loop of transfer RNAs. This is tRNA pseudouridine synthase A from Methanosarcina barkeri (strain Fusaro / DSM 804).